Reading from the N-terminus, the 422-residue chain is Glucosylglycerol-phosphate phosphatase (422 aa).

Asp-403 acts as the Proton donor in catalysis.

Belongs to the histidine acid phosphatase family. As to quaternary structure, monomer. Interacts with GGPS.

The enzyme catalyses 2-O-(alpha-D-glucopyranosyl)-sn-glycerol 3-phosphate + H2O = 2-O-(alpha-D-glucopyranosyl)glycerol + phosphate. Phosphorylates glucosylglycerol-phosphate the precursor of the osmoprotectant glucosylglycerol necessary for salt adaptation of Synechocystis. This is Glucosylglycerol-phosphate phosphatase (stpA) from Synechocystis sp. (strain ATCC 27184 / PCC 6803 / Kazusa).